Consider the following 157-residue polypeptide: SsrA-binding protein (157 aa).

Belongs to the SmpB family.

It is found in the cytoplasm. In terms of biological role, required for rescue of stalled ribosomes mediated by trans-translation. Binds to transfer-messenger RNA (tmRNA), required for stable association of tmRNA with ribosomes. tmRNA and SmpB together mimic tRNA shape, replacing the anticodon stem-loop with SmpB. tmRNA is encoded by the ssrA gene; the 2 termini fold to resemble tRNA(Ala) and it encodes a 'tag peptide', a short internal open reading frame. During trans-translation Ala-aminoacylated tmRNA acts like a tRNA, entering the A-site of stalled ribosomes, displacing the stalled mRNA. The ribosome then switches to translate the ORF on the tmRNA; the nascent peptide is terminated with the 'tag peptide' encoded by the tmRNA and targeted for degradation. The ribosome is freed to recommence translation, which seems to be the essential function of trans-translation. The protein is SsrA-binding protein of Clostridium novyi (strain NT).